The sequence spans 534 residues: Beta-glucosidase 31 (534 aa).

Residues 1–22 form the signal peptide; it reads MAIKLIALVITLCVASWDVAQG. Residue glutamine 51 participates in a beta-D-glucoside binding. Residue asparagine 68 is glycosylated (N-linked (GlcNAc...) asparagine). A beta-D-glucoside contacts are provided by residues histidine 154 and 199 to 200; that span reads NE. Glutamate 200 serves as the catalytic Proton donor. A disulfide bond links cysteine 219 and cysteine 227. Residue tyrosine 344 coordinates a beta-D-glucoside. Asparagine 374 carries N-linked (GlcNAc...) asparagine glycosylation. Glutamate 417 is a binding site for a beta-D-glucoside. Glutamate 417 acts as the Nucleophile in catalysis. An N-linked (GlcNAc...) asparagine glycan is attached at asparagine 425. A beta-D-glucoside-binding positions include tryptophan 467, 474 to 475, and phenylalanine 483; that span reads EW.

This sequence belongs to the glycosyl hydrolase 1 family.

The catalysed reaction is Hydrolysis of terminal, non-reducing beta-D-glucosyl residues with release of beta-D-glucose.. The chain is Beta-glucosidase 31 from Arabidopsis thaliana (Mouse-ear cress).